We begin with the raw amino-acid sequence, 471 residues long: Glutamine synthetase (471 aa).

Positions 14-99 constitute a GS beta-grasp domain; that stretch reads QKIQMIDLKF…ICSIKEPRTG (86 aa). Positions 106–471 constitute a GS catalytic domain; sequence PRVIAQKAID…PYEFYLYYDC (366 aa). Residues Glu-131 and Glu-133 each contribute to the Mg(2+) site. Glu-208 contributes to the ATP binding site. The Mg(2+) site is built by Glu-213 and Glu-221. L-glutamate is bound by residues 265–266 and Gly-266; that span reads NG. His-270 is a Mg(2+) binding site. ATP contacts are provided by residues 272-274 and Ser-274; that span reads HQS. L-glutamate is bound by residues Arg-322, Glu-328, and Arg-340. ATP contacts are provided by Arg-340, Arg-345, and Lys-354. Glu-359 contributes to the Mg(2+) binding site. Arg-361 contributes to the L-glutamate binding site. Residue Tyr-399 is modified to O-AMP-tyrosine.

It belongs to the glutamine synthetase family. In terms of assembly, oligomer of 12 subunits arranged in the form of two hexagons. Mg(2+) is required as a cofactor.

It localises to the cytoplasm. The enzyme catalyses L-glutamate + NH4(+) + ATP = L-glutamine + ADP + phosphate + H(+). The activity of this enzyme could be controlled by adenylation under conditions of abundant glutamine. Functionally, involved in nitrogen metabolism via ammonium assimilation. Catalyzes the ATP-dependent biosynthesis of glutamine from glutamate and ammonia. The polypeptide is Glutamine synthetase (Microchaete diplosiphon (Fremyella diplosiphon)).